Consider the following 412-residue polypeptide: Chorismate synthase (412 aa).

The NADP(+) site is built by Arg-40 and Arg-46. FMN-binding positions include 135 to 137, 256 to 257, Gly-300, 315 to 319, and Arg-341; these read RAS, QA, and KPIST. Basic and acidic residues predominate over residues 391-404; it reads QREPRQESSDEQPA. The segment at 391–412 is disordered; it reads QREPRQESSDEQPARRAANTAG.

Belongs to the chorismate synthase family. Homotetramer. FMNH2 serves as cofactor.

It carries out the reaction 5-O-(1-carboxyvinyl)-3-phosphoshikimate = chorismate + phosphate. The protein operates within metabolic intermediate biosynthesis; chorismate biosynthesis; chorismate from D-erythrose 4-phosphate and phosphoenolpyruvate: step 7/7. In terms of biological role, catalyzes the anti-1,4-elimination of the C-3 phosphate and the C-6 proR hydrogen from 5-enolpyruvylshikimate-3-phosphate (EPSP) to yield chorismate, which is the branch point compound that serves as the starting substrate for the three terminal pathways of aromatic amino acid biosynthesis. This reaction introduces a second double bond into the aromatic ring system. The chain is Chorismate synthase from Mycobacteroides abscessus (strain ATCC 19977 / DSM 44196 / CCUG 20993 / CIP 104536 / JCM 13569 / NCTC 13031 / TMC 1543 / L948) (Mycobacterium abscessus).